Here is a 115-residue protein sequence, read N- to C-terminus: Macroconotoxin Mu8.1 (115 aa).

Positions 1–21 (MDMKMTFSGLVLVVLVTTVVG) are cleaved as a signal peptide. Residues 22-26 (SSVRR) constitute a propeptide that is removed on maturation. 5 cysteine pairs are disulfide-bonded: Cys36-Cys77, Cys44-Cys60, Cys48-Cys56, Cys83-Cys115, and Cys87-Cys97. Glu40 provides a ligand contact to Zn(2+). Zn(2+) is bound at residue His68.

Mostly found as a homodimer in solution; non-covalently bound. Expressed by the venom duct.

It is found in the secreted. Its function is as follows. Modestly and reversibly inhibits Cav2.3/CACNA1E (IC(50)=5.8 uM) recombinantly expressed in HEK293 cells without affecting the voltage dependence of activation. In mouse DRG sensory neurons, modulates depolarization-induced calcium influx. This chain is Macroconotoxin Mu8.1, found in Conus mucronatus (Pointed cone).